The following is a 146-amino-acid chain: uncharacterized protein (146 aa).

Residues F7 to N27 form a helical membrane-spanning segment.

Belongs to the asfivirus E146L family.

It localises to the host membrane. The protein localises to the virion. This is an uncharacterized protein from Ornithodoros (relapsing fever ticks).